Here is a 104-residue protein sequence, read N- to C-terminus: MTKSELIEILTKRQAHLKSDDVDLAVKSLLEMMGGALSEGDRIEIRGFGSFSLHYRPPRCGRNPKTGESVALPGKYVPHFKPGKELRERVASVVPLAECGDITE.

Belongs to the bacterial histone-like protein family. In terms of assembly, heterodimer of an alpha and a beta chain.

This protein is one of the two subunits of integration host factor, a specific DNA-binding protein that functions in genetic recombination as well as in transcriptional and translational control. The sequence is that of Integration host factor subunit beta (ihfB) from Xylella fastidiosa (strain 9a5c).